Here is a 150-residue protein sequence, read N- to C-terminus: Globin-2 A chain (150 aa).

Blocked amino end (Val) is present on Val-2. Residues 10–150 (CGSEAIKANL…ALVGVVQAAL (141 aa)) enclose the Globin domain. His-102 is a heme b binding site.

It belongs to the globin family. In terms of assembly, heterotetramer of two alpha chains and two beta chains.

The sequence is that of Globin-2 A chain from Anadara inaequivalvis (Inequivalve ark).